The primary structure comprises 352 residues: tRNA-specific 2-thiouridylase MnmA (352 aa).

6–13 (AVSGGTDS) contacts ATP. Cys92 acts as the Nucleophile in catalysis. Cysteines 92 and 189 form a disulfide. Gly116 is an ATP binding site. An interaction with tRNA region spans residues 139 to 141 (KDQ). Cys189 serves as the catalytic Cysteine persulfide intermediate. The tract at residues 294–295 (RY) is interaction with tRNA.

It belongs to the MnmA/TRMU family.

The protein resides in the cytoplasm. The catalysed reaction is S-sulfanyl-L-cysteinyl-[protein] + uridine(34) in tRNA + AH2 + ATP = 2-thiouridine(34) in tRNA + L-cysteinyl-[protein] + A + AMP + diphosphate + H(+). Catalyzes the 2-thiolation of uridine at the wobble position (U34) of tRNA, leading to the formation of s(2)U34. This chain is tRNA-specific 2-thiouridylase MnmA, found in Lawsonia intracellularis (strain PHE/MN1-00).